A 482-amino-acid chain; its full sequence is uncharacterized protein (482 aa).

Positions 12–80 (LPKYRQIVHF…MGKGTVVINN (69 aa)) constitute an HTH gntR-type domain. The segment at residues 40–59 (QRTLAKDFQVNRSTVITALE) is a DNA-binding region (H-T-H motif). At K325 the chain carries N6-(pyridoxal phosphate)lysine.

The protein in the C-terminal section; belongs to the class-I pyridoxal-phosphate-dependent aminotransferase family. Pyridoxal 5'-phosphate serves as cofactor.

This is an uncharacterized protein from Bacillus subtilis (strain 168).